Here is a 211-residue protein sequence, read N- to C-terminus: Probable superoxide dismutase [Mn], mitochondrial (211 aa).

Residues His36, His84, Asp173, and His177 each coordinate Mn(2+).

This sequence belongs to the iron/manganese superoxide dismutase family. In terms of assembly, homotetramer. Mn(2+) is required as a cofactor.

The protein resides in the mitochondrion matrix. It catalyses the reaction 2 superoxide + 2 H(+) = H2O2 + O2. In terms of biological role, destroys superoxide anion radicals which are normally produced within the cells and which are toxic to biological systems. The chain is Probable superoxide dismutase [Mn], mitochondrial from Debaryomyces hansenii (strain ATCC 36239 / CBS 767 / BCRC 21394 / JCM 1990 / NBRC 0083 / IGC 2968) (Yeast).